Reading from the N-terminus, the 66-residue chain is DNA-directed RNA polymerase subunit omega (66 aa).

The protein belongs to the RNA polymerase subunit omega family. As to quaternary structure, the RNAP catalytic core consists of 2 alpha, 1 beta, 1 beta' and 1 omega subunit. When a sigma factor is associated with the core the holoenzyme is formed, which can initiate transcription.

It catalyses the reaction RNA(n) + a ribonucleoside 5'-triphosphate = RNA(n+1) + diphosphate. In terms of biological role, promotes RNA polymerase assembly. Latches the N- and C-terminal regions of the beta' subunit thereby facilitating its interaction with the beta and alpha subunits. In Clostridium botulinum (strain Eklund 17B / Type B), this protein is DNA-directed RNA polymerase subunit omega.